The chain runs to 765 residues: SNF-related serine/threonine-protein kinase (765 aa).

A Protein kinase domain is found at 16–269; sequence YDLDKTLGRG…LEEIENHPWL (254 aa). ATP is bound by residues 22 to 30 and lysine 45; that span reads LGRGHFAVV. Aspartate 139 functions as the Proton acceptor in the catalytic mechanism. A Phosphoserine modification is found at serine 162. Threonine 173 carries the post-translational modification Phosphothreonine; by LKB1. A UBA domain is found at 291 to 334; that stretch reads SEEEHNSIIQRMVLGDIADRDAIVEALETNRYNHITATYFLLAE. 5 positions are modified to phosphoserine: serine 362, serine 390, serine 482, serine 495, and serine 518. The tract at residues 512–634 is disordered; sequence LKMNIASPGT…RCAGPSNSMQ (123 aa). Residues 522-532 show a composition bias toward basic residues; that stretch reads VHKRYHRRKSQ. The span at 533 to 542 shows a compositional bias: low complexity; sequence GRGSSCSSSE. Arginine 534 is subject to Omega-N-methylarginine. Basic and acidic residues predominate over residues 549–558; the sequence is ESRRRLDKDS. A compositionally biased stretch (gly residues) spans 603 to 614; sequence AGGGSPSSGSGG. Phosphoserine is present on serine 607.

This sequence belongs to the protein kinase superfamily. CAMK Ser/Thr protein kinase family. It depends on Mg(2+) as a cofactor. Post-translationally, autophosphorylated. Phosphorylation on Thr-173 by STK11/LKB1 in complex with STE20-related adapter-alpha (STRADA) pseudo kinase and CAB39. In terms of tissue distribution, expressed in hematopoietic progenitor cells and leukemic cell lines. Weakly expressed in the testis.

It localises to the nucleus. The enzyme catalyses L-seryl-[protein] + ATP = O-phospho-L-seryl-[protein] + ADP + H(+). The catalysed reaction is L-threonyl-[protein] + ATP = O-phospho-L-threonyl-[protein] + ADP + H(+). With respect to regulation, activated by phosphorylation on Thr-173. Its function is as follows. May play a role in hematopoietic cell proliferation or differentiation. Potential mediator of neuronal apoptosis. In Homo sapiens (Human), this protein is SNF-related serine/threonine-protein kinase.